Here is a 98-residue protein sequence, read N- to C-terminus: Co-chaperonin GroES (98 aa).

It belongs to the GroES chaperonin family. Heptamer of 7 subunits arranged in a ring. Interacts with the chaperonin GroEL.

The protein resides in the cytoplasm. Together with the chaperonin GroEL, plays an essential role in assisting protein folding. The GroEL-GroES system forms a nano-cage that allows encapsulation of the non-native substrate proteins and provides a physical environment optimized to promote and accelerate protein folding. GroES binds to the apical surface of the GroEL ring, thereby capping the opening of the GroEL channel. The sequence is that of Co-chaperonin GroES from Paenarthrobacter aurescens (strain TC1).